The following is a 242-amino-acid chain: Small ribosomal subunit protein uS2 (242 aa).

The protein belongs to the universal ribosomal protein uS2 family.

This Shewanella woodyi (strain ATCC 51908 / MS32) protein is Small ribosomal subunit protein uS2.